Consider the following 178-residue polypeptide: M-phase-specific PLK1-interacting protein (178 aa).

Residues 1–15 (MHRPNFRPPTPPYPS) are compositionally biased toward pro residues. A disordered region spans residues 1–134 (MHRPNFRPPT…RGREKRMSNE (134 aa)). Gly residues predominate over residues 17-34 (GIGGWGGGNNFRGALGGG). R36 carries the post-translational modification Asymmetric dimethylarginine. S39 and S46 each carry phosphoserine. The residue at position 50 (T50) is a Phosphothreonine. R56 carries the post-translational modification Omega-N-methylarginine. Asymmetric dimethylarginine occurs at positions 58, 67, and 76. A compositionally biased stretch (low complexity) spans 78-96 (GSPSPGGYPGSYSRSPAGS). A phosphoserine mark is found at S79, S81, S92, S103, and S114. Residues 97 to 121 (QHQFGYSPGQQQTYPQGSPRTSTPF) are compositionally biased toward polar residues. The residue at position 116 (R116) is an Omega-N-methylarginine. Phosphothreonine is present on T119. A phosphoserine mark is found at S123 and S132.

As to quaternary structure, interacts with PLK1; phosphorylation-dependent. In terms of processing, phosphorylated during mitosis in the cell cycle probably by CDK1.

The protein localises to the nucleus. It localises to the cytoplasm. The protein resides in the cytoskeleton. Its subcellular location is the microtubule organizing center. It is found in the centrosome. May play a role in maintenance of cell cycle integrity by regulating mitosis or cytokinesis. This chain is M-phase-specific PLK1-interacting protein (Mplkip), found in Mus musculus (Mouse).